A 402-amino-acid chain; its full sequence is 1-deoxy-D-xylulose 5-phosphate reductoisomerase (402 aa).

NADPH-binding residues include Thr-25, Gly-26, Ser-27, Val-28, Arg-52, Asn-53, and Asn-136. Lys-137 lines the 1-deoxy-D-xylulose 5-phosphate pocket. Residue Glu-138 coordinates NADPH. Residue Asp-162 participates in Mn(2+) binding. Residues Ser-163, Glu-164, Ser-188, and His-211 each coordinate 1-deoxy-D-xylulose 5-phosphate. Glu-164 contacts Mn(2+). Position 217 (Gly-217) interacts with NADPH. Positions 224, 229, 230, and 233 each coordinate 1-deoxy-D-xylulose 5-phosphate. Position 233 (Glu-233) interacts with Mn(2+).

This sequence belongs to the DXR family. Requires Mg(2+) as cofactor. Mn(2+) is required as a cofactor.

The catalysed reaction is 2-C-methyl-D-erythritol 4-phosphate + NADP(+) = 1-deoxy-D-xylulose 5-phosphate + NADPH + H(+). It participates in isoprenoid biosynthesis; isopentenyl diphosphate biosynthesis via DXP pathway; isopentenyl diphosphate from 1-deoxy-D-xylulose 5-phosphate: step 1/6. Catalyzes the NADPH-dependent rearrangement and reduction of 1-deoxy-D-xylulose-5-phosphate (DXP) to 2-C-methyl-D-erythritol 4-phosphate (MEP). The sequence is that of 1-deoxy-D-xylulose 5-phosphate reductoisomerase from Rhodospirillum centenum (strain ATCC 51521 / SW).